Here is a 386-residue protein sequence, read N- to C-terminus: 1-deoxy-D-xylulose 5-phosphate reductoisomerase (386 aa).

NADPH-binding residues include threonine 7, glycine 8, serine 9, isoleucine 10, alanine 33, and asparagine 124. 1-deoxy-D-xylulose 5-phosphate is bound at residue lysine 125. Glutamate 126 provides a ligand contact to NADPH. Aspartate 148 serves as a coordination point for Mn(2+). Positions 149, 150, 174, and 197 each coordinate 1-deoxy-D-xylulose 5-phosphate. Mn(2+) is bound at residue glutamate 150. Glycine 203 serves as a coordination point for NADPH. Serine 210, asparagine 215, lysine 216, and glutamate 219 together coordinate 1-deoxy-D-xylulose 5-phosphate. Mn(2+) is bound at residue glutamate 219.

This sequence belongs to the DXR family. Requires Mg(2+) as cofactor. The cofactor is Mn(2+).

The enzyme catalyses 2-C-methyl-D-erythritol 4-phosphate + NADP(+) = 1-deoxy-D-xylulose 5-phosphate + NADPH + H(+). The protein operates within isoprenoid biosynthesis; isopentenyl diphosphate biosynthesis via DXP pathway; isopentenyl diphosphate from 1-deoxy-D-xylulose 5-phosphate: step 1/6. In terms of biological role, catalyzes the NADPH-dependent rearrangement and reduction of 1-deoxy-D-xylulose-5-phosphate (DXP) to 2-C-methyl-D-erythritol 4-phosphate (MEP). This chain is 1-deoxy-D-xylulose 5-phosphate reductoisomerase, found in Kitasatospora griseola (Streptomyces griseolosporeus).